The following is a 140-amino-acid chain: Small ribosomal subunit protein uS12 (140 aa).

2 disordered regions span residues 36-56 (TYNP…MTPK) and 117-140 (TSGV…EKKE).

It belongs to the universal ribosomal protein uS12 family. As to quaternary structure, part of the 30S ribosomal subunit. Contacts proteins S8 and S17. May interact with IF1 in the 30S initiation complex.

With S4 and S5 plays an important role in translational accuracy. Functionally, interacts with and stabilizes bases of the 16S rRNA that are involved in tRNA selection in the A site and with the mRNA backbone. Located at the interface of the 30S and 50S subunits, it traverses the body of the 30S subunit contacting proteins on the other side and probably holding the rRNA structure together. The combined cluster of proteins S8, S12 and S17 appears to hold together the shoulder and platform of the 30S subunit. This chain is Small ribosomal subunit protein uS12, found in Malacoplasma penetrans (strain HF-2) (Mycoplasma penetrans).